Consider the following 164-residue polypeptide: Putative pre-16S rRNA nuclease (164 aa).

Belongs to the YqgF nuclease family.

It is found in the cytoplasm. Its function is as follows. Could be a nuclease involved in processing of the 5'-end of pre-16S rRNA. The protein is Putative pre-16S rRNA nuclease of Synechococcus sp. (strain CC9902).